Reading from the N-terminus, the 249-residue chain is Globin-like protein 9 (249 aa).

The tract at residues 20 to 43 is disordered; sequence TNKGPNGLARRGTQRGCSRSKSTR. In terms of domain architecture, Globin spans 52-205; that stretch reads SLTFSQKQAL…LIDELRGGFE (154 aa). His116 and His148 together coordinate heme.

It belongs to the globin family.

The chain is Globin-like protein 9 (glb-9) from Caenorhabditis elegans.